Consider the following 437-residue polypeptide: Methylenetetrahydrofolate--tRNA-(uracil-5-)-methyltransferase TrmFO (437 aa).

10–15 contributes to the FAD binding site; sequence GGGLAG.

The protein belongs to the MnmG family. TrmFO subfamily. Requires FAD as cofactor.

Its subcellular location is the cytoplasm. The catalysed reaction is uridine(54) in tRNA + (6R)-5,10-methylene-5,6,7,8-tetrahydrofolate + NADH + H(+) = 5-methyluridine(54) in tRNA + (6S)-5,6,7,8-tetrahydrofolate + NAD(+). The enzyme catalyses uridine(54) in tRNA + (6R)-5,10-methylene-5,6,7,8-tetrahydrofolate + NADPH + H(+) = 5-methyluridine(54) in tRNA + (6S)-5,6,7,8-tetrahydrofolate + NADP(+). In terms of biological role, catalyzes the folate-dependent formation of 5-methyl-uridine at position 54 (M-5-U54) in all tRNAs. This Geotalea daltonii (strain DSM 22248 / JCM 15807 / FRC-32) (Geobacter daltonii) protein is Methylenetetrahydrofolate--tRNA-(uracil-5-)-methyltransferase TrmFO.